A 66-amino-acid chain; its full sequence is Kappa-flavitoxin (66 aa).

Intrachain disulfides connect C3/C21, C14/C42, C27/C31, C46/C58, and C59/C64.

Belongs to the three-finger toxin family. Long-chain subfamily. Kappa-neurotoxin sub-subfamily. As to quaternary structure, homo- and heterodimer; non-covalently linked. In terms of tissue distribution, expressed by the venom gland.

The protein resides in the secreted. Postsynaptic neurotoxin that binds and inhibits neuronal nicotinic acetylcholine receptors (nAChR) with high affinity (IC(50)&lt;100 nM). Is a selective, and slowly reversible antagonist of alpha-3/CHRNA3-containing and some alpha-4/CHRNA4-containing AChRs. This is Kappa-flavitoxin from Bungarus flaviceps flaviceps (Red-headed krait).